The following is a 423-amino-acid chain: ATP-citrate synthase alpha chain protein 2 (423 aa).

3 residues coordinate citrate: Asn343, Thr345, and Arg376.

The protein belongs to the succinate/malate CoA ligase beta subunit family. Heterooctamer of 4 alpha and 4 beta chains.

The protein localises to the cytoplasm. Its subcellular location is the cytosol. The enzyme catalyses oxaloacetate + acetyl-CoA + ADP + phosphate = citrate + ATP + CoA. In terms of biological role, ATP citrate-lyase is the primary enzyme responsible for the synthesis of cytosolic acetyl-CoA, used for the elongation of fatty acids and biosynthesis of isoprenoids, flavonoids and malonated derivatives. May supply substrate to the cytosolic acetyl-CoA carboxylase, which generates the malonyl-CoA used for the synthesis of a multitude of compounds, including very long chain fatty acids and flavonoids. In contrast to all known animal ACL enzymes having a homomeric structure, plant ACLs are composed of alpha and beta chains. In Oryza sativa subsp. japonica (Rice), this protein is ATP-citrate synthase alpha chain protein 2 (ACLA-2).